We begin with the raw amino-acid sequence, 119 residues long: Protein phosphatase EYA1 (119 aa).

Belongs to the HAD-like hydrolase superfamily. EYA family. The cofactor is Mg(2+).

Its subcellular location is the cytoplasm. The protein resides in the nucleus. It carries out the reaction O-phospho-L-tyrosyl-[protein] + H2O = L-tyrosyl-[protein] + phosphate. The enzyme catalyses O-phospho-L-seryl-[protein] + H2O = L-seryl-[protein] + phosphate. The catalysed reaction is O-phospho-L-threonyl-[protein] + H2O = L-threonyl-[protein] + phosphate. Functions both as protein phosphatase and as transcriptional coactivator for SIX1, and probably also for other transcription factors of this family. Tyrosine phosphatase that dephosphorylates 'Tyr-142' of histone H2AX (H2AXY142ph) and promotes efficient DNA repair via the recruitment of DNA repair complexes containing MDC1. 'Tyr-142' phosphorylation of histone H2AX plays a central role in DNA repair and acts as a mark that distinguishes between apoptotic and repair responses to genotoxic stress. Its function as histone phosphatase may contribute to its function in transcription regulation during organogenesis. Also has phosphatase activity with proteins phosphorylated on Ser and Thr residues (in vitro). Required for normal embryonic development of the skeleton, kidneys and ears. The chain is Protein phosphatase EYA1 (EYA1) from Gallus gallus (Chicken).